The chain runs to 381 residues: Magnesium transporter MRS2-I (381 aa).

Transmembrane regions (helical) follow at residues 316-336 and 353-373; these read LFLS…GIFG and WVVL…VAYA. Residues 336-338 carry the Required for magnesium transport activity motif; sequence GMN.

It belongs to the CorA metal ion transporter (MIT) (TC 1.A.35.5) family.

The protein localises to the membrane. Its function is as follows. Magnesium transporter that may mediate the influx of magnesium. The sequence is that of Magnesium transporter MRS2-I (MRS2-I) from Oryza sativa subsp. indica (Rice).